A 505-amino-acid polypeptide reads, in one-letter code: MITLTGHTLTIEEMKRLLLEGEGVTACPTSMQKVAECREVVEKIVEDGKVVYGITTGFGKFSDVLIQKDDVKALQHNLIQSHACGIGDPFPEEVSRGMLILRANTMLKGVSGVRPLVVNMLLEFVNRKIHPVVPQQGSLGASGDLAPLSHLALVLLGEGEVFYKGKRVHAMVALTEEGLEPIELEAKEGLALINGTQAMTAQGVLSYIEAEATAYQAELIASMTIEGLQGIIDAFDENVHKARGYKEQVDVASRIRDILHDSKLTTKQGELRVQDAYSLRCIPQVHGASWQVLNYVKEKLEIEMNAATDNPLIFDGGEKVISGGNFHGQPIAFAMDFLKVGMAELANISERRIERLVNPQLNDLPPFLSPEPGLQSGAMIMQYAAASLVSENKTLAHPASVDSIPSSANQEDHVSMGTIASRHAHQIIQNARRVLSIEMICAMQAAEYRGIENMSTVTKSFYHQGRQQVPSITNDRIFSTDIENIAHWLKTNYSIKERLDVNAAL.

The segment at residues 141-143 (ASG) is a cross-link (5-imidazolinone (Ala-Gly)). Residue S142 is modified to 2,3-didehydroalanine (Ser).

Belongs to the PAL/histidase family. Contains an active site 4-methylidene-imidazol-5-one (MIO), which is formed autocatalytically by cyclization and dehydration of residues Ala-Ser-Gly.

Its subcellular location is the cytoplasm. The enzyme catalyses L-histidine = trans-urocanate + NH4(+). It participates in amino-acid degradation; L-histidine degradation into L-glutamate; N-formimidoyl-L-glutamate from L-histidine: step 1/3. This is Histidine ammonia-lyase from Bacillus cereus (strain G9842).